A 116-amino-acid polypeptide reads, in one-letter code: M-zodatoxin-Lt6a/c (116 aa).

Positions 1–22 are cleaved as a signal peptide; it reads MKYFVVALTLAVAFVCIEECKT. Propeptides lie at residues 23-44 and 80-83; these read VEIG…DEAR and EEAR. Short sequence motifs (processing quadruplet motif) lie at residues 41-44 and 80-83; these read DEAR and EEAR. At Gln84 the chain carries Pyrrolidone carboxylic acid.

Belongs to the cationic peptide 03 (latarcin) family. 06 subfamily. Post-translationally, cleavage of the propeptide depends on the processing quadruplet motif (XXXR, with at least one of X being E). Expressed by the venom gland.

It is found in the secreted. Functionally, does not have antimicrobial activity against Gram-positive bacteria (A.globiformis VKM Ac-1112 (MIC&gt;70 uM) and B.subtilis VKM B-501 (MIC&gt;70 uM)), Gram-negative bacteria (E.coli DH5-alpha (MIC&gt;70 uM), E.coli MH1 (MIC&gt;70 uM) and P.aeruginosa PAO1 (MIC&gt;70 uM)), yeast (P.pastoris GS115 (MIC&gt;70 uM) or S.cerevisiae Y190 (MIC&gt;70 uM)). Does not have hemolytic activity against rabbit erythrocytes. However, it causes some conductance changes in planar bilayer membranes, without membrane rupture, suggesting a cytolytic function on other biological targets. It causes paralysis, but is not lethal when injected into insect larvae. The protein is M-zodatoxin-Lt6a/c of Lachesana tarabaevi (Spider).